Reading from the N-terminus, the 172-residue chain is Stellate orphon protein at 12D (172 aa).

It belongs to the casein kinase 2 subunit beta family. As to quaternary structure, interacts in vitro with the casein kinase 2 alpha subunit (CkII-alpha). The relevance of such interaction is however unclear in vivo. In terms of tissue distribution, probably not expressed in wild-type flies. In males lacking the Y chromosome, it is testis-specific and constitutes the main component of star-shaped crystals.

Its function is as follows. Unknown. In males lacking the Y chromosome, its strong overexpression leads to the appearance of proteinaceous star-shaped crystals in the primary spermatocytes causing meiotic drive, possibly by interfering with normal casein kinase 2 activity. In Drosophila melanogaster (Fruit fly), this protein is Stellate orphon protein at 12D (Ste12DOR).